Reading from the N-terminus, the 261-residue chain is Uridine-cytidine kinase 2-B (261 aa).

29–37 (GGTASGKSS) serves as a coordination point for ATP. Residues Asp86, Tyr114, His119, Arg168, Arg178, and Gln186 each coordinate substrate. Residue Asp215 participates in ATP binding. The tract at residues 238–261 (RQNGFQNGHGTPRQRRTSESSRPH) is disordered.

The protein belongs to the uridine kinase family. As to quaternary structure, homotetramer.

It catalyses the reaction uridine + ATP = UMP + ADP + H(+). It carries out the reaction cytidine + ATP = CMP + ADP + H(+). Its pathway is pyrimidine metabolism; CTP biosynthesis via salvage pathway; CTP from cytidine: step 1/3. The protein operates within pyrimidine metabolism; UMP biosynthesis via salvage pathway; UMP from uridine: step 1/1. Phosphorylates uridine and cytidine to uridine monophosphate and cytidine monophosphate. Does not phosphorylate deoxyribonucleosides or purine ribonucleosides. Can use ATP or GTP as a phosphate donor. The sequence is that of Uridine-cytidine kinase 2-B (uck2b) from Danio rerio (Zebrafish).